The primary structure comprises 202 residues: Imidazoleglycerol-phosphate dehydratase (202 aa).

This sequence belongs to the imidazoleglycerol-phosphate dehydratase family.

The protein localises to the cytoplasm. It catalyses the reaction D-erythro-1-(imidazol-4-yl)glycerol 3-phosphate = 3-(imidazol-4-yl)-2-oxopropyl phosphate + H2O. The protein operates within amino-acid biosynthesis; L-histidine biosynthesis; L-histidine from 5-phospho-alpha-D-ribose 1-diphosphate: step 6/9. This chain is Imidazoleglycerol-phosphate dehydratase, found in Acinetobacter baylyi (strain ATCC 33305 / BD413 / ADP1).